The primary structure comprises 122 residues: Large ribosomal subunit protein uL14 (122 aa).

This sequence belongs to the universal ribosomal protein uL14 family. As to quaternary structure, part of the 50S ribosomal subunit. Forms a cluster with proteins L3 and L19. In the 70S ribosome, L14 and L19 interact and together make contacts with the 16S rRNA in bridges B5 and B8.

In terms of biological role, binds to 23S rRNA. Forms part of two intersubunit bridges in the 70S ribosome. The polypeptide is Large ribosomal subunit protein uL14 (Solibacter usitatus (strain Ellin6076)).